The following is a 126-amino-acid chain: LWamide neuropeptides (126 aa).

The propeptide at 1 to 2 is 1; that stretch reads KR. A disordered region spans residues 1 to 126; sequence KRQQPGLWGR…KSAIPKAKPQ (126 aa). Tryptophan 8 is subject to Tryptophan amide. Positions 11 to 15 are cleaved as a propeptide — 2; that stretch reads SADPQ. A tryptophan amide mark is found at tryptophan 20 and tryptophan 29. Positions 32-36 are cleaved as a propeptide — 2; that stretch reads SADPQ. Tryptophan 41 and tryptophan 50 each carry tryptophan amide. Positions 53–57 are cleaved as a propeptide — 2; sequence SADPQ. Tryptophan amide is present on residues tryptophan 62 and tryptophan 71. A propeptide spans 74–78 (2); that stretch reads SADPQ. Position 83 is a tryptophan amide (tryptophan 83). The propeptide at 86-93 is 3; sequence SAGSGKRQ. Tryptophan 99 bears the Tryptophan amide mark. Positions 102–126 are cleaved as a propeptide — 4; it reads SAEPPQYKELEDLKQKSAIPKAKPQ. A compositionally biased stretch (basic and acidic residues) spans 107-116; it reads QYKELEDLKQ.

Belongs to the LWamide neuropeptide family.

It is found in the secreted. Functionally, metamorphosin A may be part of an internal signaling system involved in control of metamorphosis. The chain is LWamide neuropeptides from Anemonia sulcata (Mediterranean snakelocks sea anemone).